The following is a 509-amino-acid chain: Histidine ammonia-lyase (509 aa).

The segment at residues 142-144 is a cross-link (5-imidazolinone (Ala-Gly)); that stretch reads ASG. Ser143 is subject to 2,3-didehydroalanine (Ser).

It belongs to the PAL/histidase family. Post-translationally, contains an active site 4-methylidene-imidazol-5-one (MIO), which is formed autocatalytically by cyclization and dehydration of residues Ala-Ser-Gly.

The protein resides in the cytoplasm. It carries out the reaction L-histidine = trans-urocanate + NH4(+). The protein operates within amino-acid degradation; L-histidine degradation into L-glutamate; N-formimidoyl-L-glutamate from L-histidine: step 1/3. This chain is Histidine ammonia-lyase, found in Pseudomonas aeruginosa (strain UCBPP-PA14).